A 327-amino-acid polypeptide reads, in one-letter code: GTPase Obg (327 aa).

Residues 1 to 159 enclose the Obg domain; sequence MQFIDQANII…WEVQLELKLL (159 aa). Positions 160 to 327 constitute an OBG-type G domain; that stretch reads AEVGIIGLPN…SLLSEVWNRI (168 aa). Residues 166–173, 191–195, 213–216, 280–283, and 309–311 contribute to the ATP site; these read GLPNAGKS, FTTLI, DIPG, NKKE, and SSA. The Mg(2+) site is built by Ser173 and Thr193.

It belongs to the TRAFAC class OBG-HflX-like GTPase superfamily. OBG GTPase family. As to quaternary structure, monomer. The cofactor is Mg(2+).

Its subcellular location is the cytoplasm. An essential GTPase which binds GTP, GDP and possibly (p)ppGpp with moderate affinity, with high nucleotide exchange rates and a fairly low GTP hydrolysis rate. Plays a role in control of the cell cycle, stress response, ribosome biogenesis and in those bacteria that undergo differentiation, in morphogenesis control. This is GTPase Obg from Prochlorococcus marinus (strain MIT 9515).